Consider the following 380-residue polypeptide: Cytochrome b (380 aa).

4 helical membrane-spanning segments follow: residues 34 to 54 (FGSL…LLAM), 78 to 99 (WLIR…YLHI), 114 to 134 (WNTG…GYVL), and 179 to 199 (FFAL…IHLT). 2 residues coordinate heme b: His84 and His98. His183 and His197 together coordinate heme b. His202 contributes to the a ubiquinone binding site. Transmembrane regions (helical) follow at residues 227–247 (LKDI…ALFS), 289–309 (LGGV…PLLH), 321–341 (LSQL…WVGS), and 348–368 (FIII…ILLP).

Belongs to the cytochrome b family. As to quaternary structure, the cytochrome bc1 complex contains 11 subunits: 3 respiratory subunits (MT-CYB, CYC1 and UQCRFS1), 2 core proteins (UQCRC1 and UQCRC2) and 6 low-molecular weight proteins (UQCRH/QCR6, UQCRB/QCR7, UQCRQ/QCR8, UQCR10/QCR9, UQCR11/QCR10 and a cleavage product of UQCRFS1). This cytochrome bc1 complex then forms a dimer. Heme b is required as a cofactor.

The protein resides in the mitochondrion inner membrane. Component of the ubiquinol-cytochrome c reductase complex (complex III or cytochrome b-c1 complex) that is part of the mitochondrial respiratory chain. The b-c1 complex mediates electron transfer from ubiquinol to cytochrome c. Contributes to the generation of a proton gradient across the mitochondrial membrane that is then used for ATP synthesis. The protein is Cytochrome b (MT-CYB) of Pelagodroma marina (White-faced storm-petrel).